Consider the following 217-residue polypeptide: Probable transaldolase (217 aa).

The active-site Schiff-base intermediate with substrate is the K85.

The protein belongs to the transaldolase family. Type 3B subfamily.

The protein localises to the cytoplasm. It catalyses the reaction D-sedoheptulose 7-phosphate + D-glyceraldehyde 3-phosphate = D-erythrose 4-phosphate + beta-D-fructose 6-phosphate. It functions in the pathway carbohydrate degradation; pentose phosphate pathway; D-glyceraldehyde 3-phosphate and beta-D-fructose 6-phosphate from D-ribose 5-phosphate and D-xylulose 5-phosphate (non-oxidative stage): step 2/3. Transaldolase is important for the balance of metabolites in the pentose-phosphate pathway. The sequence is that of Probable transaldolase from Lachnoclostridium phytofermentans (strain ATCC 700394 / DSM 18823 / ISDg) (Clostridium phytofermentans).